Here is a 267-residue protein sequence, read N- to C-terminus: Nanos homolog 1 (267 aa).

The segment at 40–56 (FSSWNDYLGLATLITRA) is essential for its translational repressor activity. Positions 57-94 (SDRGSPHEGPGPTAAGPTMGPPEDDEDDDGEEPEAGGR) are disordered. Residues 78–90 (PEDDEDDDGEEPE) are compositionally biased toward acidic residues. Residues 188-242 (VCVFCRNNKEAVALYTTHILKGPDGRVLCPVLRRYTCPLCGASGDNAHTIKYCPL) form a Nanos-type zinc finger. The Zn(2+) site is built by Cys-189, Cys-192, His-205, Cys-216, Cys-224, Cys-227, His-235, and Cys-240. Short sequence motifs (C2HC) lie at residues 189 to 216 (CVFC…RVLC) and 224 to 240 (CPLC…IKYC). The tract at residues 243–267 (SKVPPPTVRPPPRSNRDSLPSKKLR) is disordered. Residues 244–255 (KVPPPTVRPPPR) show a composition bias toward pro residues. Positions 256–267 (SNRDSLPSKKLR) are enriched in basic and acidic residues.

This sequence belongs to the nanos family. As to quaternary structure, interacts with PUM2, SNAPIN and CTNNB1. Interacts (via N-terminal region) with CTNND1. Interacts with DDX20 (via N-terminal region). As to expression, expressed in the oocyte. Transiently expressed in eight-cell embryos. At 12.5 dpc, it is re-expressed in the central nervous system and the expression continues in the adult brain, in which the hippocampal formation is the predominant region. Expressed in the seminiferous tubules of mature testis, but not in the primordial germ cells.

Its subcellular location is the cytoplasm. The protein resides in the perinuclear region. Its function is as follows. May act as a translational repressor which regulates translation of specific mRNAs by forming a complex with PUM2 that associates with the 3'-UTR of mRNA targets. Capable of interfering with the proadhesive and anti-invasive functions of E-cadherin. Up-regulates the production of MMP14 to promote tumor cell invasion. Not essential for normal development. This is Nanos homolog 1 (Nanos1) from Mus musculus (Mouse).